We begin with the raw amino-acid sequence, 268 residues long: Zinc transporter ZupT (268 aa).

The next 8 helical transmembrane spans lie at 5-25 (ILFA…GSLI), 36-56 (VLTI…MIEI), 75-95 (VVTV…DKLI), 124-144 (MGLF…LATF), 157-177 (IAVA…APIF), 187-207 (FILS…GYFL), 211-231 (FFSP…MVYI), and 248-268 (FAIG…LLFT). 2 residues coordinate Fe(2+): N136 and E139. The Zn(2+) site is built by E139 and H164. The Fe(2+) site is built by N165, E168, and E197. Residue E168 participates in Zn(2+) binding.

The protein belongs to the ZIP transporter (TC 2.A.5) family. ZupT subfamily.

The protein resides in the cell membrane. It catalyses the reaction Zn(2+)(in) = Zn(2+)(out). In terms of biological role, mediates zinc uptake. May also transport other divalent cations. This is Zinc transporter ZupT from Chlorobium chlorochromatii (strain CaD3).